A 248-amino-acid polypeptide reads, in one-letter code: Pyridoxine 5'-phosphate synthase (248 aa).

Residue Asn-12 participates in 3-amino-2-oxopropyl phosphate binding. Residue 14 to 15 (DH) coordinates 1-deoxy-D-xylulose 5-phosphate. Position 23 (Arg-23) interacts with 3-amino-2-oxopropyl phosphate. His-48 acts as the Proton acceptor in catalysis. 2 residues coordinate 1-deoxy-D-xylulose 5-phosphate: Arg-50 and His-55. Glu-75 acts as the Proton acceptor in catalysis. Thr-105 lines the 1-deoxy-D-xylulose 5-phosphate pocket. His-199 (proton donor) is an active-site residue. 3-amino-2-oxopropyl phosphate is bound by residues Gly-200 and 221–222 (GH).

This sequence belongs to the PNP synthase family. As to quaternary structure, homooctamer; tetramer of dimers.

It is found in the cytoplasm. It catalyses the reaction 3-amino-2-oxopropyl phosphate + 1-deoxy-D-xylulose 5-phosphate = pyridoxine 5'-phosphate + phosphate + 2 H2O + H(+). The protein operates within cofactor biosynthesis; pyridoxine 5'-phosphate biosynthesis; pyridoxine 5'-phosphate from D-erythrose 4-phosphate: step 5/5. Catalyzes the complicated ring closure reaction between the two acyclic compounds 1-deoxy-D-xylulose-5-phosphate (DXP) and 3-amino-2-oxopropyl phosphate (1-amino-acetone-3-phosphate or AAP) to form pyridoxine 5'-phosphate (PNP) and inorganic phosphate. The protein is Pyridoxine 5'-phosphate synthase of Jannaschia sp. (strain CCS1).